Here is a 111-residue protein sequence, read N- to C-terminus: Cytochrome c3, 26 kDa (111 aa).

Residues histidine 30, histidine 33, cysteine 38, cysteine 41, histidine 42, histidine 43, cysteine 54, cysteine 59, histidine 60, histidine 77, cysteine 86, cysteine 89, histidine 90, cysteine 105, cysteine 108, and histidine 109 each contribute to the heme c site.

As to quaternary structure, homodimer. Heme c serves as cofactor.

The protein localises to the periplasm. Its function is as follows. Participates in sulfate respiration coupled with phosphorylation by transferring electrons from the enzyme dehydrogenase to ferredoxin. The sequence is that of Cytochrome c3, 26 kDa from Desulfomicrobium norvegicum (strain DSM 1741 / NCIMB 8310) (Desulfovibrio baculatus (strain Norway 4)).